The chain runs to 116 residues: Iron-sulfur cluster insertion protein ErpA (116 aa).

Residues Cys44, Cys108, and Cys110 each coordinate iron-sulfur cluster.

This sequence belongs to the HesB/IscA family. Homodimer. Iron-sulfur cluster serves as cofactor.

Its function is as follows. Required for insertion of 4Fe-4S clusters for at least IspG. The sequence is that of Iron-sulfur cluster insertion protein ErpA from Ectopseudomonas mendocina (strain ymp) (Pseudomonas mendocina).